Consider the following 799-residue polypeptide: Phenylalanine--tRNA ligase beta subunit (799 aa).

In terms of domain architecture, tRNA-binding spans 39–150; the sequence is GKGFSGVIVG…EHLQAGTALN (112 aa). The region spanning 402-478 is the B5 domain; sequence FLELTIRCRL…RIYGYDHIPR (77 aa). Mg(2+) is bound by residues aspartate 456, aspartate 462, glutamate 465, and glutamate 466. Residues 705-798 form the FDX-ACB domain; it reads AIYPGSERDW…VSQKFANDLK (94 aa).

Belongs to the phenylalanyl-tRNA synthetase beta subunit family. Type 1 subfamily. As to quaternary structure, tetramer of two alpha and two beta subunits. Mg(2+) serves as cofactor.

The protein localises to the cytoplasm. It catalyses the reaction tRNA(Phe) + L-phenylalanine + ATP = L-phenylalanyl-tRNA(Phe) + AMP + diphosphate + H(+). The sequence is that of Phenylalanine--tRNA ligase beta subunit from Protochlamydia amoebophila (strain UWE25).